A 199-amino-acid polypeptide reads, in one-letter code: Ribonuclease HI (199 aa).

The not required for RNase H activity stretch occupies residues 1-68 (MPVVECDIQT…TAVVQPDRGG (68 aa)). Residues 66 to 197 (RGGRVHAYFD…ADALANEALD (132 aa)) enclose the RNase H type-1 domain. Residues 69 to 199 (RVHAYFDGAS…ALANEALDDA (131 aa)) are as active as intact RNase H. The Mg(2+) site is built by aspartate 75, glutamate 115, aspartate 139, and aspartate 189. The Mn(2+) site is built by aspartate 75, glutamate 115, aspartate 139, and aspartate 189.

Belongs to the RNase H family. Mn(2+) is required as a cofactor. Requires Mg(2+) as cofactor. Co(2+) serves as cofactor. The cofactor is Ni(2+).

It is found in the cytoplasm. It carries out the reaction Endonucleolytic cleavage to 5'-phosphomonoester.. Functionally, nuclease that specifically degrades the RNA of RNA-DNA hybrids; seems to act exonucleolytically on RNA/DNA hybrids. Endonucleolytically removes RNA primers from the Okazaki fragments of lagging strand synthesis on its own. Complements the temperature-sensitive phenotype of an E.coli double rnhA/rnhB (RNase H) disruption mutant. In Halobacterium salinarum (strain ATCC 700922 / JCM 11081 / NRC-1) (Halobacterium halobium), this protein is Ribonuclease HI (rnhA).